A 297-amino-acid chain; its full sequence is Phosphoribosylaminoimidazole-succinocarboxamide synthase (297 aa).

It belongs to the SAICAR synthetase family.

It carries out the reaction 5-amino-1-(5-phospho-D-ribosyl)imidazole-4-carboxylate + L-aspartate + ATP = (2S)-2-[5-amino-1-(5-phospho-beta-D-ribosyl)imidazole-4-carboxamido]succinate + ADP + phosphate + 2 H(+). It functions in the pathway purine metabolism; IMP biosynthesis via de novo pathway; 5-amino-1-(5-phospho-D-ribosyl)imidazole-4-carboxamide from 5-amino-1-(5-phospho-D-ribosyl)imidazole-4-carboxylate: step 1/2. The protein is Phosphoribosylaminoimidazole-succinocarboxamide synthase of Mycobacterium marinum (strain ATCC BAA-535 / M).